A 396-amino-acid polypeptide reads, in one-letter code: ATP-dependent RNA helicase eIF4A (396 aa).

Positions 23-51 (DSFDEMNLKSELLRGIYAYGFERPSAIQQ) match the Q motif motif. In terms of domain architecture, Helicase ATP-binding spans 54-224 (IMPVIKGHDV…TKFMRDPVRI (171 aa)). Position 67-74 (67-74 (AQSGTGKT)) interacts with ATP. A DEAD box motif is present at residues 172 to 175 (DEAD). The 162-residue stretch at 235-396 (GIKQFYIAVE…EMPMNVADLI (162 aa)) folds into the Helicase C-terminal domain.

It belongs to the DEAD box helicase family. eIF4A subfamily. As to quaternary structure, component of the eIF4F complex, which composition varies with external and internal environmental conditions. It is composed of at least eIF4A, eIF4E and eIF4G.

It is found in the cytoplasm. It carries out the reaction ATP + H2O = ADP + phosphate + H(+). Functionally, ATP-dependent RNA helicase which is a subunit of the eIF4F complex involved in cap recognition and is required for mRNA binding to ribosome. In the current model of translation initiation, eIF4A unwinds RNA secondary structures in the 5'-UTR of mRNAs which is necessary to allow efficient binding of the small ribosomal subunit, and subsequent scanning for the initiator codon. The protein is ATP-dependent RNA helicase eIF4A (TIF1) of Pyricularia oryzae (strain 70-15 / ATCC MYA-4617 / FGSC 8958) (Rice blast fungus).